The following is a 349-amino-acid chain: Sperm acrosomal protein FSA-ACR.1 (349 aa).

Positions 1-8 (MKEVYLVG) are cleaved as a signal peptide. The interval 1 to 265 (MKEVYLVGYA…EQPSGIPPSS (265 aa)) is disordered. Over residues 63-114 (TSGEHTSVEHASAEHSSTEHTSGEHASGEHTSGERATGEHTSSEHATSEHTS) the composition is skewed to basic and acidic residues. 2 stretches are compositionally biased toward polar residues: residues 117–142 (QPSG…SGEQ) and 154–171 (SGEQ…TSGE). Basic and acidic residues predominate over residues 178 to 189 (PSGEHAVAEKPS). Positions 221-248 (EQASIEKASSEQASAEQASAEQASSEQA) are enriched in low complexity. Residue asparagine 342 is glycosylated (N-linked (GlcNAc...) asparagine).

To acrosomal proteins SP-10. Testis.

It localises to the cytoplasmic vesicle. The protein resides in the secretory vesicle. The protein localises to the acrosome. The protein is Sperm acrosomal protein FSA-ACR.1 of Vulpes vulpes (Red fox).